The chain runs to 430 residues: Serine--tRNA ligase (430 aa).

Thr-235 to Glu-237 contacts L-serine. Residues Arg-266–Glu-268 and Val-282 contribute to the ATP site. Glu-289 contacts L-serine. Glu-353–Ser-356 contacts ATP. L-serine is bound at residue Ser-389.

It belongs to the class-II aminoacyl-tRNA synthetase family. Type-1 seryl-tRNA synthetase subfamily. As to quaternary structure, homodimer. The tRNA molecule binds across the dimer.

It is found in the cytoplasm. The catalysed reaction is tRNA(Ser) + L-serine + ATP = L-seryl-tRNA(Ser) + AMP + diphosphate + H(+). It catalyses the reaction tRNA(Sec) + L-serine + ATP = L-seryl-tRNA(Sec) + AMP + diphosphate + H(+). It functions in the pathway aminoacyl-tRNA biosynthesis; selenocysteinyl-tRNA(Sec) biosynthesis; L-seryl-tRNA(Sec) from L-serine and tRNA(Sec): step 1/1. Its function is as follows. Catalyzes the attachment of serine to tRNA(Ser). Is also able to aminoacylate tRNA(Sec) with serine, to form the misacylated tRNA L-seryl-tRNA(Sec), which will be further converted into selenocysteinyl-tRNA(Sec). In Chlorobium phaeovibrioides (strain DSM 265 / 1930) (Prosthecochloris vibrioformis (strain DSM 265)), this protein is Serine--tRNA ligase.